The chain runs to 266 residues: Hydroxypyruvate/pyruvate aldolase (266 aa).

Histidine 48 (proton acceptor) is an active-site residue. Positions 152 and 178 each coordinate a divalent metal cation.

This sequence belongs to the HpcH/HpaI aldolase family. It depends on a divalent metal cation as a cofactor.

The enzyme catalyses D-glyceraldehyde + pyruvate = 2-dehydro-3-deoxy-L-galactonate. It catalyses the reaction 2-dehydro-3-deoxy-D-gluconate = D-glyceraldehyde + pyruvate. In terms of biological role, aldolase which can catalyze in vitro the aldolisation reaction between hydroxypyruvate (HPA) or pyruvate (PA) and D-glyceraldehyde (D-GA). The condensation of pyruvate and D-glyceraldehyde produces 2-dehydro-3-deoxy-L-galactonate as the major product and 2-dehydro-3-deoxy-D-gluconate. Has weak activity with hydroxypyruvate and D-glyceraldehyde. In Agrobacterium fabrum (strain C58 / ATCC 33970) (Agrobacterium tumefaciens (strain C58)), this protein is Hydroxypyruvate/pyruvate aldolase.